The primary structure comprises 185 residues: ATP synthase subunit b 2 (185 aa).

The segment at 1-24 (MADSHGNAKGATAHTEAGGGHKAP) is disordered. The helical transmembrane segment at 34–56 (ASQLVSLTIAFVALYLISSRLAL) threads the bilayer.

Belongs to the ATPase B chain family. As to quaternary structure, F-type ATPases have 2 components, F(1) - the catalytic core - and F(0) - the membrane proton channel. F(1) has five subunits: alpha(3), beta(3), gamma(1), delta(1), epsilon(1). F(0) has three main subunits: a(1), b(2) and c(10-14). The alpha and beta chains form an alternating ring which encloses part of the gamma chain. F(1) is attached to F(0) by a central stalk formed by the gamma and epsilon chains, while a peripheral stalk is formed by the delta and b chains.

The protein localises to the cell inner membrane. Functionally, f(1)F(0) ATP synthase produces ATP from ADP in the presence of a proton or sodium gradient. F-type ATPases consist of two structural domains, F(1) containing the extramembraneous catalytic core and F(0) containing the membrane proton channel, linked together by a central stalk and a peripheral stalk. During catalysis, ATP synthesis in the catalytic domain of F(1) is coupled via a rotary mechanism of the central stalk subunits to proton translocation. Its function is as follows. Component of the F(0) channel, it forms part of the peripheral stalk, linking F(1) to F(0). The b'-subunit is a diverged and duplicated form of b found in plants and photosynthetic bacteria. This is ATP synthase subunit b 2 (atpF2) from Nitrobacter hamburgensis (strain DSM 10229 / NCIMB 13809 / X14).